The sequence spans 55 residues: Large ribosomal subunit protein bL33 (55 aa).

Belongs to the bacterial ribosomal protein bL33 family.

This Photorhabdus laumondii subsp. laumondii (strain DSM 15139 / CIP 105565 / TT01) (Photorhabdus luminescens subsp. laumondii) protein is Large ribosomal subunit protein bL33.